Consider the following 1188-residue polypeptide: MLIIQNTKGDSMKFIAWLDELSNKDVDIAGGKGASLGEMWNAGLPVPPAFVVTADAYRHFIKETGLMDKIREILSGLDVNDTDALTNASKKIRKLIEEAEMPEDLRLAIIEAYNKLCEMCGEDEVTVAVRSSATAEDLPEASFAGQQDTYLNIKGAENVVKYVQKCFSSLFTPRAIFYREQQGFDHFKVALAAVVQKLVNAEKAGVMFTVNPISENYDELVIEAAWGLGEGVVSGSVSPDTYIVNKKTLEIVDKHIARKETMFVKDEKGETKVVEVPDDMKEKQVLSDDEIKELAKIGLNIEKHYGKPMDVEWAYEKGKFYMLQARPITTLKKGKKEKKAKEEDIEAKILLKGIGASPGIATGVVKIIHDVSEIDKVKEGDILVTEMTTPDMVPAMKKAAAIVTDEGGLTCIEGDAKILTDRGFLKMKEVYKLVKNGEKLKVLGLNAETLKTEWKEIIDAQKREARRYEIGVYRKNKNTKDTIKITPDHKFPVFVNGELSKVQLCDIIDNNLSVLSIDYIPMIEEKYESLAEVMYLGGAVLSDGHIVRRNGKPIRVRFTQKDTEEKKDFIEKVKGDVKLIGGNFIEISNRNNVIEYQTSRKIPSEILGFIEVNINTIPLYATKDEIADLIAGFVDGDGCLSGKRRVEIYQNSSHIKKIEGLIVGLYRLGIIPRLRYKRSSTATIYFNNNLETILQRTRRIKLDKLKEFKKPVEDKKLIDISQILPELKEFDYKGYLYKTYKEKLFIGINKLEEYLSKIDKDGIERIKQKIKLLKESDIYSIRIKKVGEDYGEVYNITVKAENEFNHNYVVWTKHYTPIVVFNCHAAIVSRELGTPCVVGTKKATKVLKDGMIVTVDGEKGIVYEGEIKKVEEKEKKQEVVVQQAPIITATEVKVNVSMPEVAERAAATGADGVGLLRAEHMILGLGKHPRKILEEEGEEALIEALMEGIRKVADAFYPRPVTYRTLDAPTDEFRGLEGGENEPIEHNPMLGWRGIRRDLDEVDILKCELKAIKRLREEGYKNIEIMIPLVTHPDEVRRVKEIMREVGLEPCKDIPFGIMVETPAAALIIEDFIKEGINFVSLGTNDLTQYTIAIDRNNELVSKYYKEDHPAVLKLVEHVIKTCKKHGIKTSICGQAGSRPHIVEKLVEWGIDSVSANIDAVETIRRVVARTEQKVILNYIRKSYVERE.

The region spanning 536–670 (LGGAVLSDGH…LIVGLYRLGI (135 aa)) is the DOD-type homing endonuclease domain. Residue H824 is the Tele-phosphohistidine intermediate of the active site. R917, R964, E1061, G1083, T1084, N1085, and D1086 together coordinate substrate. E1061 lines the Mg(2+) pocket. D1086 contacts Mg(2+). C1133 serves as the catalytic Proton donor.

The protein belongs to the PEP-utilizing enzyme family. Mg(2+) is required as a cofactor. This protein undergoes a protein self splicing that involves a post-translational excision of the intervening region (intein) followed by peptide ligation.

It carries out the reaction pyruvate + ATP + H2O = phosphoenolpyruvate + AMP + phosphate + 2 H(+). Its pathway is carbohydrate biosynthesis; gluconeogenesis. Its function is as follows. Catalyzes the phosphorylation of pyruvate to phosphoenolpyruvate. The polypeptide is Probable phosphoenolpyruvate synthase (ppsA) (Methanocaldococcus jannaschii (strain ATCC 43067 / DSM 2661 / JAL-1 / JCM 10045 / NBRC 100440) (Methanococcus jannaschii)).